The chain runs to 494 residues: UPF0371 protein SPCG_0344 (494 aa).

Belongs to the UPF0371 family.

The protein is UPF0371 protein SPCG_0344 of Streptococcus pneumoniae (strain CGSP14).